Consider the following 369-residue polypeptide: uncharacterized protein (369 aa).

Belongs to the myo-inositol 1-phosphate synthase family.

This is an uncharacterized protein from Mycobacterium leprae (strain TN).